We begin with the raw amino-acid sequence, 62 residues long: MAVPKRKTSKTRRDKRRASSYKLPRVTITTCPNCGSPKLPHRVCKECGHYDGKQVVDNSEQN.

A compositionally biased stretch (basic residues) spans 1–19; it reads MAVPKRKTSKTRRDKRRAS. The interval 1-20 is disordered; it reads MAVPKRKTSKTRRDKRRASS.

The protein belongs to the bacterial ribosomal protein bL32 family.

This Finegoldia magna (strain ATCC 29328 / DSM 20472 / WAL 2508) (Peptostreptococcus magnus) protein is Large ribosomal subunit protein bL32.